We begin with the raw amino-acid sequence, 349 residues long: tRNA pseudouridine synthase D (349 aa).

F27 provides a ligand contact to substrate. The Nucleophile role is filled by D80. A substrate-binding site is contributed by N129. One can recognise a TRUD domain in the interval 155-303 (GVPNYFGAQR…VEAARRAMLL (149 aa)). F329 is a binding site for substrate.

Belongs to the pseudouridine synthase TruD family.

It catalyses the reaction uridine(13) in tRNA = pseudouridine(13) in tRNA. Functionally, responsible for synthesis of pseudouridine from uracil-13 in transfer RNAs. In Escherichia coli O9:H4 (strain HS), this protein is tRNA pseudouridine synthase D.